The primary structure comprises 122 residues: MAITKEDIIKALEEMKLTELNELVKAIEEHFDVVASAGVAVAAGPAVADAAPSEVAIMLTNAGGQKVAVIKVVKEVTGLGLMDAKKLVDGTLPVAIKENVKIEEADAIKAQLIEAGASVEYK.

It belongs to the bacterial ribosomal protein bL12 family. Homodimer. Part of the ribosomal stalk of the 50S ribosomal subunit. Forms a multimeric L10(L12)X complex, where L10 forms an elongated spine to which 2 to 4 L12 dimers bind in a sequential fashion. Binds GTP-bound translation factors.

In terms of biological role, forms part of the ribosomal stalk which helps the ribosome interact with GTP-bound translation factors. Is thus essential for accurate translation. This chain is Large ribosomal subunit protein bL12, found in Mesoplasma florum (strain ATCC 33453 / NBRC 100688 / NCTC 11704 / L1) (Acholeplasma florum).